The chain runs to 160 residues: SsrA-binding protein (160 aa).

It belongs to the SmpB family.

Its subcellular location is the cytoplasm. Functionally, required for rescue of stalled ribosomes mediated by trans-translation. Binds to transfer-messenger RNA (tmRNA), required for stable association of tmRNA with ribosomes. tmRNA and SmpB together mimic tRNA shape, replacing the anticodon stem-loop with SmpB. tmRNA is encoded by the ssrA gene; the 2 termini fold to resemble tRNA(Ala) and it encodes a 'tag peptide', a short internal open reading frame. During trans-translation Ala-aminoacylated tmRNA acts like a tRNA, entering the A-site of stalled ribosomes, displacing the stalled mRNA. The ribosome then switches to translate the ORF on the tmRNA; the nascent peptide is terminated with the 'tag peptide' encoded by the tmRNA and targeted for degradation. The ribosome is freed to recommence translation, which seems to be the essential function of trans-translation. This chain is SsrA-binding protein, found in Mannheimia succiniciproducens (strain KCTC 0769BP / MBEL55E).